Here is a 250-residue protein sequence, read N- to C-terminus: 2,3-bisphosphoglycerate-dependent phosphoglycerate mutase (250 aa).

Substrate contacts are provided by residues 10-17, 23-24, Arg-62, 89-92, Lys-100, 116-117, and 185-186; these read RHGESQWN, TG, ERHY, RR, and GN. His-11 acts as the Tele-phosphohistidine intermediate in catalysis. Glu-89 functions as the Proton donor/acceptor in the catalytic mechanism.

The protein belongs to the phosphoglycerate mutase family. BPG-dependent PGAM subfamily. Homodimer.

The enzyme catalyses (2R)-2-phosphoglycerate = (2R)-3-phosphoglycerate. The protein operates within carbohydrate degradation; glycolysis; pyruvate from D-glyceraldehyde 3-phosphate: step 3/5. Its function is as follows. Catalyzes the interconversion of 2-phosphoglycerate and 3-phosphoglycerate. This chain is 2,3-bisphosphoglycerate-dependent phosphoglycerate mutase, found in Serratia proteamaculans (strain 568).